We begin with the raw amino-acid sequence, 500 residues long: Cytochrome P450 11B3, mitochondrial (500 aa).

The transit peptide at 1-24 directs the protein to the mitochondrion; that stretch reads MALRVTADVWLARPWQCLHRTRAL. Heme is bound at residue cysteine 447.

This sequence belongs to the cytochrome P450 family. It depends on heme as a cofactor. Expressed in the adrenal cortex and in different brain tissues, including hippocampus, hypothalamus, cerebellum, cerebral cortex, and midbrain.

It localises to the mitochondrion membrane. It catalyses the reaction a steroid + 2 reduced [adrenodoxin] + O2 + 2 H(+) = an 11beta-hydroxysteroid + 2 oxidized [adrenodoxin] + H2O. The enzyme catalyses 21-hydroxyprogesterone + 2 reduced [adrenodoxin] + O2 + 2 H(+) = corticosterone + 2 oxidized [adrenodoxin] + H2O. It carries out the reaction 21-hydroxyprogesterone + 2 reduced [adrenodoxin] + O2 + 2 H(+) = 18-hydroxy-11-deoxycorticosterone + 2 oxidized [adrenodoxin] + H2O. The catalysed reaction is 21-hydroxyprogesterone + 2 reduced [adrenodoxin] + O2 + 2 H(+) = 19-hydroxy-11-deoxycorticosterone + 2 oxidized [adrenodoxin] + H2O. A cytochrome P450 monooxygenase involved in the biosynthesis of adrenal corticoids. Catalyzes the hydroxylation of steroids at 11beta, 18- or 19-positions, with preferred regioselectivity at 11beta and 18. Converts 11-deoxycorticosterone into corticosterone, 18-hydroxy-11-deoxycorticosterone, and/or 19-hydroxy-11-deoxycorticosterone, but not to 18-hydroxycorticosterone or aldosterone. Mechanistically, uses molecular oxygen inserting one oxygen atom into a substrate for hydroxylation and reducing the second into a water molecule. Two electrons are provided by NADPH via a two-protein mitochondrial transfer system comprising flavoprotein FDXR (adrenodoxin/ferredoxin reductase) and nonheme iron-sulfur protein FDX1 or FDX2 (adrenodoxin/ferredoxin). The sequence is that of Cytochrome P450 11B3, mitochondrial (Cyp11b3) from Rattus norvegicus (Rat).